Here is a 149-residue protein sequence, read N- to C-terminus: Transcriptional regulator MraZ (149 aa).

SpoVT-AbrB domains are found at residues 7 to 54 (KYVN…GISH) and 83 to 126 (AVQL…QPQN).

Belongs to the MraZ family. As to quaternary structure, forms oligomers.

The protein resides in the cytoplasm. Its subcellular location is the nucleoid. The polypeptide is Transcriptional regulator MraZ (Rickettsia felis (strain ATCC VR-1525 / URRWXCal2) (Rickettsia azadi)).